A 206-amino-acid polypeptide reads, in one-letter code: Potassium channel B446_29190 (206 aa).

A topological domain (cytoplasmic) is located at residue Met1. Residues 2 to 25 traverse the membrane as a helical segment; the sequence is NESGRVEAFSDGVFAIAITLLILD. A RxxxFSD motif motif is present at residues 6-12; sequence RVEAFSD. The Extracellular segment spans residues 26-44; that stretch reads IKVPKADGPGGLWHALGAQ. The short helix H1 stretch occupies residues 31-34; sequence ADGP. Positions 36 to 42 are short helix H2; it reads GLWHALG. Residues 45 to 70 traverse the membrane as a helical segment; the sequence is WPSYAAYVVSFLVIGIMWVNHHQVFS. At 71-76 the chain is on the cytoplasmic side; the sequence is YVARVD. The helical transmembrane segment at 77–102 threads the bilayer; that stretch reads RALMFLNLLVLMVVAAVPWPTAMLAE. The Extracellular portion of the chain corresponds to 103–110; it reads YLREDRAS. Residues 111–135 form a helical membrane-spanning segment; it reads HVAAAVYSLVMVAMALAFQALWWHL. Topologically, residues 136-147 are cytoplasmic; it reads TRTGHLFDPRVD. A helical transmembrane segment spans residues 148-174; the sequence is APAARATRIRFALGSLGYPLTVGLAFV. Over 175–176 the chain is Extracellular; sequence SA. A helical membrane pass occupies residues 177–192; the sequence is PLTLAAHGLLALYYGF. Over 193–206 the chain is Cytoplasmic; sequence NQVPVPTREAAAPS.

The protein belongs to the TMEM175 family. Homotetramer.

The protein resides in the membrane. It catalyses the reaction K(+)(in) = K(+)(out). Its function is as follows. Potassium channel. This Streptomyces collinus (strain DSM 40733 / Tue 365) protein is Potassium channel B446_29190.